The primary structure comprises 366 residues: Protein disulfide isomerase-like 2-1 (366 aa).

Residues 1–29 form the signal peptide; that stretch reads MATPQISRKALASLLLLVAAAAAVSTASA. Thioredoxin domains are found at residues 30-138 and 139-257; these read DDVL…SEAA and TNVK…EKCG. Active-site nucleophile residues include Cys59, Cys62, Cys178, and Cys181. Intrachain disulfides connect Cys59–Cys62 and Cys178–Cys181.

This sequence belongs to the protein disulfide isomerase family.

The protein resides in the secreted. The catalysed reaction is Catalyzes the rearrangement of -S-S- bonds in proteins.. Functionally, acts as a protein-folding catalyst that interacts with nascent polypeptides to catalyze the formation, isomerization, and reduction or oxidation of disulfide bonds. May play a role in storage protein biogenesis. This chain is Protein disulfide isomerase-like 2-1 (PDIL2-1), found in Oryza sativa subsp. japonica (Rice).